The chain runs to 289 residues: MAEQLEVVIITGMSGAGKTVAVQSFEDLGYFVIDNMIPSVATKFVDAVKQSGEITRMAMVMDSRSRGFYDQVVPCVAQLRGRSDLTLRLLFLEATDEELVSRYKESRRAHPLSHQDGVLPGIMRERQLLNDLKSQADLVVDTTTLTPRQLKQRITERFSPDEAHSFYVNVMSFGFKYGLPLDADLVIDVRFLPNPYYIPDLKYQTGNDPAVQAYVMDNPLAQNFYQHLYSLIEVALPGYIKEGKSSLTIAIGCTGGQHRSVTIANRLAADLKNNQYPVHVHHRDVDKAN.

An ATP-binding site is contributed by 12–19; sequence GMSGAGKT. 62–65 is a GTP binding site; it reads DSRS.

The protein belongs to the RapZ-like family.

Functionally, displays ATPase and GTPase activities. The chain is Nucleotide-binding protein LAF_0356 from Limosilactobacillus fermentum (strain NBRC 3956 / LMG 18251) (Lactobacillus fermentum).